Consider the following 314-residue polypeptide: MIEIEKPVIETIEISEDAKYGKFVVEPLERGYGTTLGNSLRRILLSSLPGAAVTSVQIDGVLHEFSTIEGVVEDVTTIVLNLKQLALKIYSDEDKTLEIDTQGEGVVTAGDLTHDSDVDVLNPDLHIATLTTGAHLRMRITAKRGRGYVPAEGNKSDELAIGVIPIDSIYTPVSRVNYQVENTRVGQVTNYDKLTLDVWTDGSIRPEEAVSLGAKILTEHLNIFVGLTDQAQNAEIMVEKEEDQKEKVLEMTIEELDLSVRSYNCLKRAGINTVQELTQKTEEDMMKVRNLGRKSLEEVQEKLGELGLGLRKEE.

The tract at residues 1–228 (MIEIEKPVIE…EHLNIFVGLT (228 aa)) is alpha N-terminal domain (alpha-NTD). The interval 245-314 (KEKVLEMTIE…ELGLGLRKEE (70 aa)) is alpha C-terminal domain (alpha-CTD).

The protein belongs to the RNA polymerase alpha chain family. Homodimer. The RNAP catalytic core consists of 2 alpha, 1 beta, 1 beta' and 1 omega subunit. When a sigma factor is associated with the core the holoenzyme is formed, which can initiate transcription.

It carries out the reaction RNA(n) + a ribonucleoside 5'-triphosphate = RNA(n+1) + diphosphate. In terms of biological role, DNA-dependent RNA polymerase catalyzes the transcription of DNA into RNA using the four ribonucleoside triphosphates as substrates. The sequence is that of DNA-directed RNA polymerase subunit alpha from Halalkalibacterium halodurans (strain ATCC BAA-125 / DSM 18197 / FERM 7344 / JCM 9153 / C-125) (Bacillus halodurans).